Consider the following 31-residue polypeptide: Photosystem II reaction center protein Psb30 (31 aa).

A helical membrane pass occupies residues 5 to 25 (IQLTSLLLIVIAGPLVIALLF).

Belongs to the Psb30/Ycf12 family. In terms of assembly, PSII is composed of 1 copy each of membrane proteins PsbA, PsbB, PsbC, PsbD, PsbE, PsbF, PsbH, PsbI, PsbJ, PsbK, PsbL, PsbM, PsbT, PsbX, PsbY, PsbZ, Psb30/Ycf12, peripheral proteins of the oxygen-evolving complex and a large number of cofactors. It forms dimeric complexes.

It localises to the plastid. It is found in the chloroplast thylakoid membrane. A core subunit of photosystem II (PSII), probably helps stabilize the reaction center. The sequence is that of Photosystem II reaction center protein Psb30 from Phacus acuminatus.